The primary structure comprises 194 residues: RNA pyrophosphohydrolase (194 aa).

The 144-residue stretch at 6 to 149 (GFRPNVGIIL…KRDVYQRALQ (144 aa)) folds into the Nudix hydrolase domain. The short motif at 38–59 (GGIKFGETPEQAMYRELEEEVG) is the Nudix box element. The tract at residues 158–194 (PTQHVPPQHNTARYLRQTHASRKPDEPSTEKTKPDNE) is disordered. Over residues 179-194 (RKPDEPSTEKTKPDNE) the composition is skewed to basic and acidic residues.

It belongs to the Nudix hydrolase family. RppH subfamily. It depends on a divalent metal cation as a cofactor.

Functionally, accelerates the degradation of transcripts by removing pyrophosphate from the 5'-end of triphosphorylated RNA, leading to a more labile monophosphorylated state that can stimulate subsequent ribonuclease cleavage. The chain is RNA pyrophosphohydrolase from Janthinobacterium sp. (strain Marseille) (Minibacterium massiliensis).